Reading from the N-terminus, the 493-residue chain is Probable cytochrome P450 508A2 (493 aa).

Residues 1–21 (MIFGIIVYLFLIYILHNAYSK) traverse the membrane as a helical segment. Heme is bound at residue Cys439.

This sequence belongs to the cytochrome P450 family. Heme serves as cofactor.

The protein resides in the membrane. In Dictyostelium discoideum (Social amoeba), this protein is Probable cytochrome P450 508A2 (cyp508A2-1).